The primary structure comprises 292 residues: Ribosomal protein L11 methyltransferase (292 aa).

The S-adenosyl-L-methionine site is built by Thr-136, Gly-159, Asp-181, and Asn-228.

This sequence belongs to the methyltransferase superfamily. PrmA family.

It is found in the cytoplasm. It carries out the reaction L-lysyl-[protein] + 3 S-adenosyl-L-methionine = N(6),N(6),N(6)-trimethyl-L-lysyl-[protein] + 3 S-adenosyl-L-homocysteine + 3 H(+). In terms of biological role, methylates ribosomal protein L11. This chain is Ribosomal protein L11 methyltransferase, found in Rhizobium etli (strain CIAT 652).